The chain runs to 405 residues: Probable tRNA sulfurtransferase (405 aa).

Positions 60–165 (TAVMDRLKGV…LNGVFLSGQT (106 aa)) constitute a THUMP domain. ATP contacts are provided by residues 183-184 (ML), 208-209 (HF), Arg265, Gly287, and Gln296.

This sequence belongs to the ThiI family.

The protein resides in the cytoplasm. The enzyme catalyses [ThiI sulfur-carrier protein]-S-sulfanyl-L-cysteine + a uridine in tRNA + 2 reduced [2Fe-2S]-[ferredoxin] + ATP + H(+) = [ThiI sulfur-carrier protein]-L-cysteine + a 4-thiouridine in tRNA + 2 oxidized [2Fe-2S]-[ferredoxin] + AMP + diphosphate. It carries out the reaction [ThiS sulfur-carrier protein]-C-terminal Gly-Gly-AMP + S-sulfanyl-L-cysteinyl-[cysteine desulfurase] + AH2 = [ThiS sulfur-carrier protein]-C-terminal-Gly-aminoethanethioate + L-cysteinyl-[cysteine desulfurase] + A + AMP + 2 H(+). The protein operates within cofactor biosynthesis; thiamine diphosphate biosynthesis. Functionally, catalyzes the ATP-dependent transfer of a sulfur to tRNA to produce 4-thiouridine in position 8 of tRNAs, which functions as a near-UV photosensor. Also catalyzes the transfer of sulfur to the sulfur carrier protein ThiS, forming ThiS-thiocarboxylate. This is a step in the synthesis of thiazole, in the thiamine biosynthesis pathway. The sulfur is donated as persulfide by IscS. The sequence is that of Probable tRNA sulfurtransferase from Levilactobacillus brevis (strain ATCC 367 / BCRC 12310 / CIP 105137 / JCM 1170 / LMG 11437 / NCIMB 947 / NCTC 947) (Lactobacillus brevis).